Consider the following 492-residue polypeptide: Dipeptide permease D (492 aa).

The next 13 membrane-spanning stretches (helical) occupy residues 14 to 34 (VVAL…LLIL), 49 to 69 (ALFS…GYLA), 91 to 111 (LVLG…AIIV), 138 to 158 (GGFS…PIAC), 167 to 187 (WAMG…IFLC), 212 to 232 (NWGW…VLFW), 236 to 256 (SVYA…RIYL), 269 to 289 (LIVV…QGGS), 312 to 332 (MFQS…AWLV), 344 to 364 (IWGK…ILTL), 379 to 399 (LMVL…PVAM), 413 to 433 (VLTG…AGVI), and 458 to 478 (VFSQ…VIWL).

This sequence belongs to the major facilitator superfamily. Proton-dependent oligopeptide transporter (POT/PTR) (TC 2.A.17) family. DtpD subfamily.

It localises to the cell inner membrane. In terms of biological role, probable proton-dependent permease that transports dipeptides. The protein is Dipeptide permease D of Klebsiella pneumoniae (strain 342).